Consider the following 614-residue polypeptide: Pyruvate decarboxylase 2 (614 aa).

Residues Asp50 and His137 each contribute to the substrate site. The tract at residues 415–523 (DSWFNCQKLK…FLINNGGYTI (109 aa)) is thiamine pyrophosphate binding. Mg(2+) is bound by residues Asp491, Asn518, and Gly520. A substrate-binding site is contributed by Glu524.

This sequence belongs to the TPP enzyme family. As to quaternary structure, homotetramer. A metal cation serves as cofactor. It depends on thiamine diphosphate as a cofactor. As to expression, pollen.

It catalyses the reaction a 2-oxocarboxylate + H(+) = an aldehyde + CO2. In Nicotiana tabacum (Common tobacco), this protein is Pyruvate decarboxylase 2 (PDC2).